The primary structure comprises 66 residues: Moricin-2 (66 aa).

The first 24 residues, Met1–Pro24, serve as a signal peptide directing secretion.

Expressed in fat body and to a lesser extent in hemocyte and Malpighian tubules.

It is found in the secreted. Has antibacterial activity against Gram-positive and Gram-negative bacteria. Probably acts by disturbing membrane functions with its amphipathic structure. The sequence is that of Moricin-2 (MOR2) from Bombyx mori (Silk moth).